The following is a 240-amino-acid chain: MNERDSRNQIGDLPFRVKEGFSVYEFIEQLYEAHVVERINRFLVKVTFNGKEFLAHLHDPGRLKDLIYPGNLVLIRETKGYKTKFSITAAYSNSRFVVLDSRLHNIIASKFLPEAYEKEIKVGNSRIDFKYDNTYLEVKGCTLVENEIAYFPDAPTERGRRHLKELRELMKKGFNSILLILVMRDDAKCFLPNEKTDPKFSIEFWNSINEGLNVNIKTFKLVGNKIIYVRDIPLCKTNLT.

The protein belongs to the SfsA family.

The chain is Sugar fermentation stimulation protein homolog from Saccharolobus islandicus (strain L.S.2.15 / Lassen #1) (Sulfolobus islandicus).